The chain runs to 98 residues: NADH-ubiquinone oxidoreductase chain 4L (98 aa).

Transmembrane regions (helical) follow at residues 1–21, 29–49, and 61–81; these read MSIT…GLLM, SLLC…MAIL, and IILL…LVMV.

The protein belongs to the complex I subunit 4L family. Core subunit of respiratory chain NADH dehydrogenase (Complex I) which is composed of 45 different subunits.

Its subcellular location is the mitochondrion inner membrane. The enzyme catalyses a ubiquinone + NADH + 5 H(+)(in) = a ubiquinol + NAD(+) + 4 H(+)(out). Functionally, core subunit of the mitochondrial membrane respiratory chain NADH dehydrogenase (Complex I) which catalyzes electron transfer from NADH through the respiratory chain, using ubiquinone as an electron acceptor. Part of the enzyme membrane arm which is embedded in the lipid bilayer and involved in proton translocation. This chain is NADH-ubiquinone oxidoreductase chain 4L (MT-ND4L), found in Mesophylla macconnelli (MacConnell's bat).